Consider the following 229-residue polypeptide: Cilia- and flagella-associated protein 95 (229 aa).

The Extracellular segment spans residues Met1–Gly123. Residue Asn75 is glycosylated (N-linked (GlcNAc...) asparagine). A helical membrane pass occupies residues Ile124–Phe140. Over Pro141–Ile229 the chain is Cytoplasmic. The interval Leu153 to Pro163 is mn.

Microtubule inner protein component of sperm flagellar doublet microtubules. Interacts with MYH9. Interacts with MYH10. As to expression, expressed in undifferentiated embryonic stem cells. Expressed in airway epithelial cells.

Its subcellular location is the cytoplasm. It localises to the cytoskeleton. It is found in the cilium axoneme. The protein resides in the flagellum axoneme. The protein localises to the cell membrane. In terms of biological role, microtubule inner protein (MIP) part of the dynein-decorated doublet microtubules (DMTs) in cilia axoneme, which is required for motile cilia beating. The chain is Cilia- and flagella-associated protein 95 from Homo sapiens (Human).